The chain runs to 94 residues: MKFSGLILGALALVSGAIAVDIQKSVIITYKENTPDSVIQQDKKAILDDGGVITHEYTLMKGFSAKVNAKTLESVSASSESYATIEEDKVVSTL.

The N-terminal stretch at 1–19 is a signal peptide; the sequence is MKFSGLILGALALVSGAIA.

The protein belongs to the protease inhibitor I9 family.

This is an uncharacterized protein from Neurospora crassa (strain ATCC 24698 / 74-OR23-1A / CBS 708.71 / DSM 1257 / FGSC 987).